The following is a 429-amino-acid chain: Glutamate-1-semialdehyde 2,1-aminomutase 2 (429 aa).

Lys268 carries the N6-(pyridoxal phosphate)lysine modification.

The protein belongs to the class-III pyridoxal-phosphate-dependent aminotransferase family. HemL subfamily. Homodimer. Pyridoxal 5'-phosphate is required as a cofactor.

The protein resides in the cytoplasm. The catalysed reaction is (S)-4-amino-5-oxopentanoate = 5-aminolevulinate. Its pathway is porphyrin-containing compound metabolism; protoporphyrin-IX biosynthesis; 5-aminolevulinate from L-glutamyl-tRNA(Glu): step 2/2. The protein is Glutamate-1-semialdehyde 2,1-aminomutase 2 of Geobacillus thermodenitrificans (strain NG80-2).